An 85-amino-acid chain; its full sequence is Small proline-rich protein 2D (85 aa).

Residues 1–11 (MSYQQQQCKQP) show a composition bias toward low complexity. Positions 1-20 (MSYQQQQCKQPCQPPPVCPP) are disordered. Repeat copies occupy residues 21 to 29 (KKCPEPCPP), 30 to 38 (LKCPEPCPP), 39 to 47 (PKCPEPCPP), and 48 to 56 (PKCPEPCPE). Residues 21–56 (KKCPEPCPPLKCPEPCPPPKCPEPCPPPKCPEPCPE) form a 4 X 9 AA approximate tandem repeats region. The disordered stretch occupies residues 57–85 (PCPPPSCQQKCPPAQPPPPCQQKCPPKSK).

Belongs to the cornifin (SPRR) family. Expressed in uterus.

It is found in the cytoplasm. Its function is as follows. Cross-linked envelope protein of keratinocytes. It is a keratinocyte protein that first appears in the cell cytosol, but ultimately becomes cross-linked to membrane proteins by transglutaminase. All that results in the formation of an insoluble envelope beneath the plasma membrane. In Mus musculus (Mouse), this protein is Small proline-rich protein 2D (Sprr2d).